The primary structure comprises 54 residues: CIILLLTIFEINADVKVTDCSKDEYSWCVEKCTKVRSKVRQCKVINDSVKCQCH.

3 cysteine pairs are disulfide-bonded: Cys20/Cys42, Cys28/Cys51, and Cys32/Cys53.

Expressed by the venom gland.

It is found in the secreted. The chain is Putative neurotoxin-I from Lychas mucronatus (Chinese swimming scorpion).